Reading from the N-terminus, the 402-residue chain is WAT1-related protein At5g07050 (402 aa).

10 helical membrane-spanning segments follow: residues 20–40 (FAMI…KISL), 48–68 (VLVV…AFFF), 74–94 (PKIT…GPVI), 109–129 (TFSC…AVLF), 149–169 (VVTV…VELF), 196–216 (FLKG…LFVL), 229–249 (LSLT…VTFV), 266–286 (LAAA…QGIV), 293–313 (VFAT…GSFV), and 318–338 (IFLG…AVLW). EamA domains follow at residues 29 to 159 (YAGM…MLMT) and 208 to 337 (LAWA…YAVL).

This sequence belongs to the drug/metabolite transporter (DMT) superfamily. Plant drug/metabolite exporter (P-DME) (TC 2.A.7.4) family.

The protein resides in the membrane. The polypeptide is WAT1-related protein At5g07050 (Arabidopsis thaliana (Mouse-ear cress)).